The following is an 81-amino-acid chain: Defensin-like protein 45 (81 aa).

Residues 1 to 27 form the signal peptide; that stretch reads MAITKTSATFVLLIILAASLSNFNVLA. Intrachain disulfides connect Cys-40–Cys-79, Cys-44–Cys-67, Cys-53–Cys-77, and Cys-57–Cys-78.

It belongs to the DEFL family.

It localises to the secreted. The protein is Defensin-like protein 45 of Arabidopsis thaliana (Mouse-ear cress).